The sequence spans 472 residues: 3-isopropylmalate dehydratase large subunit (472 aa).

Cys-347, Cys-407, and Cys-410 together coordinate [4Fe-4S] cluster.

It belongs to the aconitase/IPM isomerase family. LeuC type 1 subfamily. In terms of assembly, heterodimer of LeuC and LeuD. [4Fe-4S] cluster is required as a cofactor.

It catalyses the reaction (2R,3S)-3-isopropylmalate = (2S)-2-isopropylmalate. It participates in amino-acid biosynthesis; L-leucine biosynthesis; L-leucine from 3-methyl-2-oxobutanoate: step 2/4. In terms of biological role, catalyzes the isomerization between 2-isopropylmalate and 3-isopropylmalate, via the formation of 2-isopropylmaleate. In Bacillus subtilis (strain 168), this protein is 3-isopropylmalate dehydratase large subunit.